Consider the following 651-residue polypeptide: Chaperone protein HtpG (651 aa).

The segment at 1–353 (MAAHVEQLEF…AQDMSLNVSR (353 aa)) is a; substrate-binding. The b stretch occupies residues 354-569 (EILQQDRQIR…TFGITPALAR (216 aa)). Residues 570–651 (MYRASGQPVP…RLTRTVGDQT (82 aa)) are c.

Belongs to the heat shock protein 90 family. Homodimer.

Its subcellular location is the cytoplasm. In terms of biological role, molecular chaperone. Has ATPase activity. This Mycolicibacterium vanbaalenii (strain DSM 7251 / JCM 13017 / BCRC 16820 / KCTC 9966 / NRRL B-24157 / PYR-1) (Mycobacterium vanbaalenii) protein is Chaperone protein HtpG.